The chain runs to 841 residues: GRIP1-associated protein 1 (841 aa).

Ala-2 is subject to N-acetylalanine. 2 coiled-coil regions span residues 4–161 (ALSE…YGKE) and 208–641 (EQLQ…NSKS). 2 disordered regions span residues 532 to 551 (AEES…KQCR) and 558 to 580 (LKGK…EERD). Phosphoserine occurs at positions 655, 666, 668, 669, 688, 690, 691, and 692. The tract at residues 681–706 (SSAVPARSLSSSPQAQPPRPAELSDE) is disordered. Low complexity predominate over residues 682-694 (SAVPARSLSSSPQ). 2 coiled-coil regions span residues 701–735 (AELS…LEVS) and 785–814 (DENL…KDME).

Interacts with GRIP1, GRIP2 and AMPA receptors. Interacts (via C-terminus) with MAPK8/JNK1 and MAP3K1/MEKK1; the interaction promotes MAP3K1-mediated phosphorylation of MAPK8. Interacts (via N-terminus) with RAB4A (in GTP-bound form). Interacts (via C-terminus) with STX12. Post-translationally, proteolytically cleaved by caspase-3. A minor C-terminal proteolytic fragment of 30 kDa is produced. Proteolytic cleavage is required for JNK signaling activation.

The protein localises to the early endosome membrane. The protein resides in the recycling endosome membrane. It is found in the cell projection. It localises to the axon. Its subcellular location is the dendrite. The protein localises to the synapse. Functionally, regulates the endosomal recycling back to the neuronal plasma membrane, possibly by connecting early and late recycling endosomal domains and promoting segregation of recycling endosomes from early endosomal membranes. Involved in the localization of recycling endosomes to dendritic spines, thereby playing a role in the maintenance of dendritic spine morphology. Required for the activity-induced AMPA receptor recycling to dendrite membranes and for long-term potentiation and synaptic plasticity. Functions as a scaffold protein to facilitate MAP3K1/MEKK1-mediated activation of the JNK1 kinase by phosphorylation, possibly by bringing MAP3K1/MEKK1 and JNK1 in close proximity. The sequence is that of GRIP1-associated protein 1 from Homo sapiens (Human).